A 502-amino-acid polypeptide reads, in one-letter code: ATP synthase subunit alpha (502 aa).

Positions 115–138 are disordered; it reads VDGLGPIETTETRPIESPAPGVMD. Residue 169 to 176 participates in ATP binding; it reads GDRQTGKT.

It belongs to the ATPase alpha/beta chains family. As to quaternary structure, F-type ATPases have 2 components, CF(1) - the catalytic core - and CF(0) - the membrane proton channel. CF(1) has five subunits: alpha(3), beta(3), gamma(1), delta(1), epsilon(1). CF(0) has three main subunits: a(1), b(2) and c(9-12). The alpha and beta chains form an alternating ring which encloses part of the gamma chain. CF(1) is attached to CF(0) by a central stalk formed by the gamma and epsilon chains, while a peripheral stalk is formed by the delta and b chains.

Its subcellular location is the cell membrane. The catalysed reaction is ATP + H2O + 4 H(+)(in) = ADP + phosphate + 5 H(+)(out). In terms of biological role, produces ATP from ADP in the presence of a proton gradient across the membrane. The alpha chain is a regulatory subunit. This chain is ATP synthase subunit alpha, found in Geobacillus sp. (strain WCH70).